A 392-amino-acid chain; its full sequence is 3-ketoacyl-CoA thiolase (392 aa).

Cys95 serves as the catalytic Acyl-thioester intermediate. Residues His347 and Cys377 each act as proton acceptor in the active site.

This sequence belongs to the thiolase-like superfamily. Thiolase family. In terms of assembly, heterotetramer of two alpha chains (FadB) and two beta chains (FadA).

The protein resides in the cytoplasm. It catalyses the reaction an acyl-CoA + acetyl-CoA = a 3-oxoacyl-CoA + CoA. The protein operates within lipid metabolism; fatty acid beta-oxidation. In terms of biological role, catalyzes the final step of fatty acid oxidation in which acetyl-CoA is released and the CoA ester of a fatty acid two carbons shorter is formed. The polypeptide is 3-ketoacyl-CoA thiolase (Chromohalobacter salexigens (strain ATCC BAA-138 / DSM 3043 / CIP 106854 / NCIMB 13768 / 1H11)).